The sequence spans 481 residues: ADAMTS-like protein 5 (481 aa).

An N-terminal signal peptide occupies residues 1–42 (MGKLRPGRVEWLASGHTERPHLFQNLLLFLWALLNCGLGVSA). The region spanning 45 to 97 (PGEWTPWVSWTRCSSSCGRGVSVRSRRCLRLPGEEPCWGDSHEYRLCQLPDCP) is the TSP type-1 domain. 3 disulfide bridges follow: C57/C91, C61/C96, and C72/C81. N-linked (GlcNAc...) asparagine glycosylation is present at N218. The tract at residues 331 to 361 (QPQPRGVEPQPPAAPAVTPAQTPTLAPDPCP) is disordered. The span at 345 to 355 (PAVTPAQTPTL) shows a compositional bias: low complexity. 3 cysteine pairs are disulfide-bonded: C360-C425, C363-C427, and C377-C479. The NTR domain maps to 360-479 (CPPCPDTRGR…SRIRLTARRC (120 aa)).

Interacts with heparin, FBN1 and FBN2. In terms of processing, proteolytically cleaved to release a C-terminal fragment containing the NTR domain. Post-translationally, contains at least one additional N-linked glycosylation site.

Its subcellular location is the secreted. It localises to the extracellular space. The protein localises to the extracellular matrix. Functionally, may play a role in modulation of fibrillin microfibrils in the extracellular matrix (ECM). The protein is ADAMTS-like protein 5 (ADAMTSL5) of Homo sapiens (Human).